The chain runs to 485 residues: Elongation factor TuB, chloroplastic (485 aa).

A chloroplast-targeting transit peptide spans 1–76; the sequence is MASISAASAT…TTHPRRFTVR (76 aa). Residues 86–290 enclose the tr-type G domain; sequence KPHVNIGTIG…NVDEYIPIPQ (205 aa). The G1 stretch occupies residues 95–102; sequence GHVDHGKT. A GTP-binding site is contributed by 95-102; it reads GHVDHGKT. The tract at residues 136 to 140 is G2; the sequence is GITIN. The segment at 157-160 is G3; it reads DCPG. GTP-binding positions include 157 to 161 and 212 to 215; these read DCPGH and NKQD. Residues 212–215 are G4; sequence NKQD. The interval 250–252 is G5; the sequence is SAL.

This sequence belongs to the TRAFAC class translation factor GTPase superfamily. Classic translation factor GTPase family. EF-Tu/EF-1A subfamily.

Its subcellular location is the plastid. The protein resides in the chloroplast. This protein promotes the GTP-dependent binding of aminoacyl-tRNA to the A-site of ribosomes during protein biosynthesis. The chain is Elongation factor TuB, chloroplastic (TUFB) from Nicotiana sylvestris (Wood tobacco).